The primary structure comprises 912 residues: Protein translocase subunit SecA (912 aa).

Residues Q87, 105–109 (GEGKT), and D510 contribute to the ATP site. Residues 854–912 (KLRHEQASAAQAEGEGDDGQQGQQATPETFVRQERKVGRNEPCPCGSGKKYKQCCGKVS) form a disordered region. Zn(2+)-binding residues include C896, C898, C907, and C908.

The protein belongs to the SecA family. In terms of assembly, monomer and homodimer. Part of the essential Sec protein translocation apparatus which comprises SecA, SecYEG and auxiliary proteins SecDF-YajC and YidC. The cofactor is Zn(2+).

It localises to the cell inner membrane. Its subcellular location is the cytoplasm. It catalyses the reaction ATP + H2O + cellular proteinSide 1 = ADP + phosphate + cellular proteinSide 2.. Functionally, part of the Sec protein translocase complex. Interacts with the SecYEG preprotein conducting channel. Has a central role in coupling the hydrolysis of ATP to the transfer of proteins into and across the cell membrane, serving both as a receptor for the preprotein-SecB complex and as an ATP-driven molecular motor driving the stepwise translocation of polypeptide chains across the membrane. The sequence is that of Protein translocase subunit SecA from Marinobacter nauticus (strain ATCC 700491 / DSM 11845 / VT8) (Marinobacter aquaeolei).